Reading from the N-terminus, the 369-residue chain is 3-dehydroquinate synthase (369 aa).

Residues 71-76 (DGECHK), 105-109 (GVIND), 129-130 (TT), Lys142, Lys151, and 169-172 (TLST) each bind NAD(+). 3 residues coordinate Zn(2+): Glu184, His247, and His264.

The protein belongs to the sugar phosphate cyclases superfamily. Dehydroquinate synthase family. Co(2+) serves as cofactor. The cofactor is Zn(2+). Requires NAD(+) as cofactor.

Its subcellular location is the cytoplasm. The enzyme catalyses 7-phospho-2-dehydro-3-deoxy-D-arabino-heptonate = 3-dehydroquinate + phosphate. It functions in the pathway metabolic intermediate biosynthesis; chorismate biosynthesis; chorismate from D-erythrose 4-phosphate and phosphoenolpyruvate: step 2/7. Its function is as follows. Catalyzes the conversion of 3-deoxy-D-arabino-heptulosonate 7-phosphate (DAHP) to dehydroquinate (DHQ). The protein is 3-dehydroquinate synthase of Dichelobacter nodosus (strain VCS1703A).